We begin with the raw amino-acid sequence, 555 residues long: CTP synthase (555 aa).

The segment at methionine 1–valine 277 is amidoligase domain. Residue serine 26 participates in CTP binding. Serine 26 is a binding site for UTP. Position 27-32 (glycine 27–isoleucine 32) interacts with ATP. Residue tyrosine 67 coordinates L-glutamine. Residue aspartate 84 participates in ATP binding. Positions 84 and 152 each coordinate Mg(2+). Residues aspartate 159–glutamate 161, lysine 198–glutamine 203, and lysine 234 contribute to the CTP site. UTP is bound by residues lysine 198 to glutamine 203 and lysine 234. One can recognise a Glutamine amidotransferase type-1 domain in the interval leucine 307–alanine 542. Residue glycine 364 participates in L-glutamine binding. The active-site Nucleophile; for glutamine hydrolysis is the cysteine 391. L-glutamine contacts are provided by residues leucine 392 to glutamine 395, glutamate 415, and arginine 472. Residues histidine 515 and glutamate 517 contribute to the active site.

This sequence belongs to the CTP synthase family. In terms of assembly, homotetramer.

The enzyme catalyses UTP + L-glutamine + ATP + H2O = CTP + L-glutamate + ADP + phosphate + 2 H(+). It catalyses the reaction L-glutamine + H2O = L-glutamate + NH4(+). It carries out the reaction UTP + NH4(+) + ATP = CTP + ADP + phosphate + 2 H(+). It participates in pyrimidine metabolism; CTP biosynthesis via de novo pathway; CTP from UDP: step 2/2. With respect to regulation, allosterically activated by GTP, when glutamine is the substrate; GTP has no effect on the reaction when ammonia is the substrate. The allosteric effector GTP functions by stabilizing the protein conformation that binds the tetrahedral intermediate(s) formed during glutamine hydrolysis. Inhibited by the product CTP, via allosteric rather than competitive inhibition. Functionally, catalyzes the ATP-dependent amination of UTP to CTP with either L-glutamine or ammonia as the source of nitrogen. Regulates intracellular CTP levels through interactions with the four ribonucleotide triphosphates. The sequence is that of CTP synthase from Haloquadratum walsbyi (strain DSM 16790 / HBSQ001).